The chain runs to 114 residues: MIGIDIVSIGRISRLKERHGELFLRRFLSEDELALAKSDASIAGLWAAKEAASKALGVGIGAECSFFDIIIEKSPKNAPILKFSPKIYENFNIKEATLSISHDAGFAIAVAIVS.

Mg(2+) is bound by residues D5 and E50.

It belongs to the P-Pant transferase superfamily. AcpS family. Requires Mg(2+) as cofactor.

Its subcellular location is the cytoplasm. The catalysed reaction is apo-[ACP] + CoA = holo-[ACP] + adenosine 3',5'-bisphosphate + H(+). Transfers the 4'-phosphopantetheine moiety from coenzyme A to a Ser of acyl-carrier-protein. This Campylobacter curvus (strain 525.92) protein is Holo-[acyl-carrier-protein] synthase.